Consider the following 546-residue polypeptide: Cytochrome P450 monooxygenase 219 (546 aa).

The signal sequence occupies residues 1–22 (MATLIVLLYGLLAFGTVWLVRR). 2 N-linked (GlcNAc...) asparagine glycosylation sites follow: Asn-367 and Asn-441. Cys-487 contacts heme.

The protein belongs to the cytochrome P450 family. It depends on heme as a cofactor.

The protein operates within secondary metabolite biosynthesis. Its function is as follows. Cytochrome P450 monooxygenase that is able to use testosterone, anthracene, carbazole, pyrene, phenanthrene and trans-stilbene as substrates for oxidation. These multifunctional properties against a series of polycyclic aromatic hydrocarbons (PAHs) suggest that CYP219 would play important roles, at least in part, in fungal metabolic systems involved in xenobiotic detoxification. In Postia placenta (strain ATCC 44394 / Madison 698-R) (Brown rot fungus), this protein is Cytochrome P450 monooxygenase 219.